A 60-amino-acid polypeptide reads, in one-letter code: Large ribosomal subunit protein bL32 (60 aa).

Belongs to the bacterial ribosomal protein bL32 family.

This chain is Large ribosomal subunit protein bL32, found in Streptococcus gordonii (strain Challis / ATCC 35105 / BCRC 15272 / CH1 / DL1 / V288).